A 152-amino-acid polypeptide reads, in one-letter code: Small ribosomal subunit protein bS6 (152 aa).

Positions 94-152 (VKQEGPLPTPKPSNKSSTQSENKDNPETKVESKEEQSVTNSDTSTTKKDDNEIKENTES) are disordered. 2 stretches are compositionally biased toward basic and acidic residues: residues 114 to 129 (ENKDNPETKVESKEEQ) and 138 to 152 (TTKKDDNEIKENTES).

It belongs to the bacterial ribosomal protein bS6 family.

Its function is as follows. Binds together with bS18 to 16S ribosomal RNA. The sequence is that of Small ribosomal subunit protein bS6 from Prochlorococcus marinus (strain MIT 9312).